A 340-amino-acid polypeptide reads, in one-letter code: Glycerol-3-phosphate dehydrogenase [NAD(P)+] (340 aa).

Serine 13, tryptophan 14, and lysine 108 together coordinate NADPH. Residues lysine 108, glycine 139, and serine 141 each coordinate sn-glycerol 3-phosphate. Alanine 143 serves as a coordination point for NADPH. Lysine 194, aspartate 247, serine 257, arginine 258, and asparagine 259 together coordinate sn-glycerol 3-phosphate. Lysine 194 acts as the Proton acceptor in catalysis. Arginine 258 serves as a coordination point for NADPH. NADPH contacts are provided by valine 282 and glutamate 284.

Belongs to the NAD-dependent glycerol-3-phosphate dehydrogenase family.

It is found in the cytoplasm. The enzyme catalyses sn-glycerol 3-phosphate + NAD(+) = dihydroxyacetone phosphate + NADH + H(+). It catalyses the reaction sn-glycerol 3-phosphate + NADP(+) = dihydroxyacetone phosphate + NADPH + H(+). It functions in the pathway membrane lipid metabolism; glycerophospholipid metabolism. Catalyzes the reduction of the glycolytic intermediate dihydroxyacetone phosphate (DHAP) to sn-glycerol 3-phosphate (G3P), the key precursor for phospholipid synthesis. This chain is Glycerol-3-phosphate dehydrogenase [NAD(P)+], found in Streptococcus sanguinis (strain SK36).